A 209-amino-acid polypeptide reads, in one-letter code: Peptide methionine sulfoxide reductase MsrA (209 aa).

Residue Cys14 is part of the active site. The disordered stretch occupies residues 183 to 209 (FSALTTGGNQPGARGGLTNNTCQHPRH). Over residues 199 to 209 (LTNNTCQHPRH) the composition is skewed to polar residues.

It belongs to the MsrA Met sulfoxide reductase family.

It carries out the reaction L-methionyl-[protein] + [thioredoxin]-disulfide + H2O = L-methionyl-(S)-S-oxide-[protein] + [thioredoxin]-dithiol. It catalyses the reaction [thioredoxin]-disulfide + L-methionine + H2O = L-methionine (S)-S-oxide + [thioredoxin]-dithiol. In terms of biological role, has an important function as a repair enzyme for proteins that have been inactivated by oxidation. Catalyzes the reversible oxidation-reduction of methionine sulfoxide in proteins to methionine. This chain is Peptide methionine sulfoxide reductase MsrA, found in Pseudomonas fluorescens.